Reading from the N-terminus, the 184-residue chain is MKTLTDSFVYLGHWPSAGSFGFNTDILATNPINLSVVFGVLIFFGKGVLNDLLDNRKQRILNTIRNSEELREGAIQQLENALARLRKVETEADQFRVNGYSEIEREKLNLINSTYKTLKQLENYKNETILFEQQRTINQVRERVFQQALQGAIGTLNSCLSNELHLRTINANIGMFGTMKEITD.

The chain crosses the membrane as a helical span at residues 27–49 (LATNPINLSVVFGVLIFFGKGVL).

This sequence belongs to the ATPase B chain family. In terms of assembly, F-type ATPases have 2 components, F(1) - the catalytic core - and F(0) - the membrane proton channel. F(1) has five subunits: alpha(3), beta(3), gamma(1), delta(1), epsilon(1). F(0) has four main subunits: a(1), b(1), b'(1) and c(10-14). The alpha and beta chains form an alternating ring which encloses part of the gamma chain. F(1) is attached to F(0) by a central stalk formed by the gamma and epsilon chains, while a peripheral stalk is formed by the delta, b and b' chains.

Its subcellular location is the plastid. The protein localises to the chloroplast thylakoid membrane. F(1)F(0) ATP synthase produces ATP from ADP in the presence of a proton or sodium gradient. F-type ATPases consist of two structural domains, F(1) containing the extramembraneous catalytic core and F(0) containing the membrane proton channel, linked together by a central stalk and a peripheral stalk. During catalysis, ATP synthesis in the catalytic domain of F(1) is coupled via a rotary mechanism of the central stalk subunits to proton translocation. Its function is as follows. Component of the F(0) channel, it forms part of the peripheral stalk, linking F(1) to F(0). This is ATP synthase subunit b, chloroplastic from Olimarabidopsis pumila (Dwarf rocket).